The chain runs to 218 residues: Glutathione S-transferase Mu 1 (218 aa).

The GST N-terminal domain maps to P2–G88. Residue Y7–W8 coordinates glutathione. T34 is subject to Phosphothreonine. Glutathione is bound by residues R43 to W46, K50, and N59 to L60. S67 bears the Phosphoserine mark. Q72–S73 contributes to the glutathione binding site. Positions T90–I208 constitute a GST C-terminal domain. Y116 contributes to the substrate binding site. S210 bears the Phosphoserine mark.

Homodimer.

The protein localises to the cytoplasm. The catalysed reaction is RX + glutathione = an S-substituted glutathione + a halide anion + H(+). The enzyme catalyses prostaglandin A2 + glutathione = prostaglandin A2-S-(R)-glutathione. It carries out the reaction prostaglandin J2 + glutathione = prostaglandin J2-S-(R)-glutathione. It catalyses the reaction prostaglandin J2 + glutathione = prostaglandin J2-S-(S)-glutathione. The catalysed reaction is prostaglandin A2 + glutathione = prostaglandin A2-S-(S)-glutathione. The enzyme catalyses 11(S)-hydroxy-14(S),15(S)-epoxy-(5Z,8Z,12E)-eicosatrienoate + glutathione = (11S,15S)-dihydroxy-14(R)-S-glutathionyl-(5Z,8Z,12E)-eicosatrienoate. Functionally, conjugation of reduced glutathione to a wide number of exogenous and endogenous hydrophobic electrophiles. Involved in the formation of glutathione conjugates of both prostaglandin A2 (PGA2) and prostaglandin J2 (PGJ2). Participates in the formation of novel hepoxilin regioisomers. The chain is Glutathione S-transferase Mu 1 from Mus musculus (Mouse).